The primary structure comprises 276 residues: HUWE1-associated protein modifying stress responses 2 (276 aa).

Disordered regions lie at residues 146 to 182 (GKVP…TPVG), 204 to 238 (ISMR…PNSL), and 252 to 276 (VRKR…NRMV). Over residues 149–165 (PPTPQPPRTPRMSPRPP) the composition is skewed to pro residues. Composition is skewed to low complexity over residues 166 to 179 (AAAS…ESGT) and 208 to 219 (SGPPGSSSQDGG). A nuclear localization signal region spans residues 252-276 (VRKRTSAQFGDGSADSPLHKRNRMV).

Belongs to the HAPSTR1 family. As to quaternary structure, homooligomer. Heterooligomer with HAPSTR1; the interaction is direct and stabilizes HAPSTR1 independently of HUWE1. Interacts with HUWE1.

Its subcellular location is the nucleus. Its function is as follows. Together with HAPSTR1 plays a central regulatory role in the cellular response to molecular stressors, such as DNA damage, nutrient scarcity, and protein misfolding. Regulates these multiple stress response signaling pathways by stabilizing HAPSTR1, but also independently of HAPSTR1. In Mus musculus (Mouse), this protein is HUWE1-associated protein modifying stress responses 2.